The sequence spans 450 residues: Bifunctional apoptosis regulator (450 aa).

The tract at residues 1 to 20 is disordered; sequence MEEPQKSYVNTMDLERDEPL. Residues 1–140 are Cytoplasmic-facing; that stretch reads MEEPQKSYVN…PNTGRANQQM (140 aa). The RING-type zinc-finger motif lies at 34–74; it reads CHCCYDILVNPTTLNCGHSFCRHCLALWWASSKKTECPECR. The chain crosses the membrane as a helical span at residues 141-161; it reads GGGFFSGVLTALTGVAVVLLV. Residues 162-331 are Lumenal-facing; sequence YHWSSRESEH…KEPTWKQWRE (170 aa). The SAM domain occupies 182 to 249; the sequence is WTAEEVVLWL…LMELERVKAL (68 aa). An N-linked (GlcNAc...) asparagine glycan is attached at Asn232. The chain crosses the membrane as a helical span at residues 332-352; it reads FLVKYSFLPYQLIAEFAWDWL. At 353–360 the chain is on the cytoplasmic side; the sequence is EVHYWTSR. The chain crosses the membrane as a helical span at residues 361–381; sequence FLIINAMLLSVLELFSFWRIW. At 382–404 the chain is on the lumenal side; it reads SRSELKTVPQRMWSHFWKVSTQG. Residues 405-425 traverse the membrane as a helical segment; it reads LFVAMFWPLIPQFVCNCLFYW. The Cytoplasmic segment spans residues 426 to 450; it reads ALYFNPIINIDLVVKELRRLETQVL.

In terms of assembly, interacts with CASP8, BCL2 and BCL2L1 through SAM domain and also with HIP1, IFT57, ESRRBL1 and BCAP31. Interacts with NGFR; this interaction inhibits NF-kappa-B and JNK-related signaling pathways. Post-translationally, mediates RING-dependent self-ubiquitination leading to proteasomal degradation. As to expression, expressed highly in brain, moderately in small intestine, weakly in testes and only faintly in liver and skeletal muscle. Not expressed in heart, kidney, lung and spleen.

It is found in the endoplasmic reticulum membrane. It catalyses the reaction S-ubiquitinyl-[E2 ubiquitin-conjugating enzyme]-L-cysteine + [acceptor protein]-L-lysine = [E2 ubiquitin-conjugating enzyme]-L-cysteine + N(6)-ubiquitinyl-[acceptor protein]-L-lysine.. In terms of biological role, membrane-bound E3 ubiquitin ligase that plays a role in several processes including apoptosis regulation or reticulum endoplasmic stress. Has anti-apoptotic activity, both for apoptosis triggered via death-receptors and via mitochondrial factors. Contributes to the dynamic control of IRE1/ERN1 signaling during ER stress by inducing BAX inhibitor 1/TMBIM6 proteasomal degradation. Promotes the activation of TGF-beta signaling by mediating the 'Lys-63'-linked ubiquitination of TGFBR1 which is critical to activate the pathway. Together with NGFR, negatively regulates NF-kappa-B and JNK-related signaling pathways. Promotes the proteasome-mediated degradation of PNPLA3, a protein involveld in lipid metabolism. This is Bifunctional apoptosis regulator (BFAR) from Homo sapiens (Human).